We begin with the raw amino-acid sequence, 199 residues long: MIKLIVGLGNPGAEYEATRHNAGFWLVDQLARMGGTTLRVEGRFHGLAGRARLWDQDIWLLKPSTFMNRSGLAVVSLARFYKILPDEIVVAHDEMDLPPGAAKLKRGGGAGGHNGLKDIAAHLTTQEFWRLRLGVGHPRNLPGGAGAGREDVVNFVLKPPRKEEQQAIDEAIDRSIDPLGLLARGDAERAMAQLHTVAR.

Y15 lines the tRNA pocket. H20 acts as the Proton acceptor in catalysis. Residues F66, N68, and N114 each contribute to the tRNA site.

Belongs to the PTH family. Monomer.

It is found in the cytoplasm. It catalyses the reaction an N-acyl-L-alpha-aminoacyl-tRNA + H2O = an N-acyl-L-amino acid + a tRNA + H(+). Hydrolyzes ribosome-free peptidyl-tRNAs (with 1 or more amino acids incorporated), which drop off the ribosome during protein synthesis, or as a result of ribosome stalling. Its function is as follows. Catalyzes the release of premature peptidyl moieties from peptidyl-tRNA molecules trapped in stalled 50S ribosomal subunits, and thus maintains levels of free tRNAs and 50S ribosomes. The polypeptide is Peptidyl-tRNA hydrolase (Cupriavidus pinatubonensis (strain JMP 134 / LMG 1197) (Cupriavidus necator (strain JMP 134))).